A 295-amino-acid polypeptide reads, in one-letter code: Ribosomal RNA small subunit methyltransferase H (295 aa).

S-adenosyl-L-methionine-binding positions include 35 to 37, Glu55, Phe82, Asp103, and Gln110; that span reads GGH.

The protein belongs to the methyltransferase superfamily. RsmH family.

It is found in the cytoplasm. The catalysed reaction is cytidine(1402) in 16S rRNA + S-adenosyl-L-methionine = N(4)-methylcytidine(1402) in 16S rRNA + S-adenosyl-L-homocysteine + H(+). Specifically methylates the N4 position of cytidine in position 1402 (C1402) of 16S rRNA. This is Ribosomal RNA small subunit methyltransferase H from Desulfotalea psychrophila (strain LSv54 / DSM 12343).